We begin with the raw amino-acid sequence, 261 residues long: Cyclin-J18-like (261 aa).

Belongs to the cyclin family.

This is Cyclin-J18-like from Oryza sativa subsp. japonica (Rice).